The following is a 385-amino-acid chain: Benzoate O-methyltransferase (385 aa).

Y18 lines the S-adenosyl-L-homocysteine pocket. Benzoate is bound at residue Q25. S-adenosyl-L-homocysteine-binding residues include C59, N64, D106, L107, S145, and Y146. Position 167 (W167) interacts with benzoate. N184, E270, F272, and N273 together coordinate Mg(2+).

The protein belongs to the methyltransferase superfamily. Type-7 methyltransferase family. SABATH subfamily. Requires Mg(2+) as cofactor.

It catalyses the reaction benzoate + S-adenosyl-L-methionine = methyl benzoate + S-adenosyl-L-homocysteine. Its function is as follows. Methyltransferase involved in the biosynthesis of methyl benzoate in response to stresses. Utilizes exclusively benzoic acid (BA) as substrate. The protein is Benzoate O-methyltransferase (OMT8) of Zea mays (Maize).